The following is a 519-amino-acid chain: Probable carboxypeptidase S-like 2 (519 aa).

Residues 25–45 (FNLIKIIIRNLLIGILLMLVL) form a helical membrane-spanning segment. His-151 contacts Zn(2+). Residue Asp-153 is part of the active site. Asp-184 serves as a coordination point for Zn(2+). Glu-218 serves as the catalytic Proton acceptor. Zn(2+) is bound by residues Glu-219, Asp-246, and His-490.

It belongs to the peptidase M20A family. The cofactor is Zn(2+).

It localises to the membrane. This is Probable carboxypeptidase S-like 2 from Dictyostelium discoideum (Social amoeba).